The following is a 381-amino-acid chain: Subtilisin E (381 aa).

An N-terminal signal peptide occupies residues 1-29 (MRSKKLWISLLFALTLIFTMAFSNMSAQA). Residues 30 to 106 (AGKSSTEKKY…VEEDHIAHEY (77 aa)) constitute a propeptide that is removed on maturation. Residues 38 to 103 (KYIVGFKQTM…VAYVEEDHIA (66 aa)) form the Inhibitor I9 domain. Gln108 is a binding site for Ca(2+). Residues 111-380 (PYGISQIKAP…KGLINVQAAA (270 aa)) enclose the Peptidase S8 domain. The Charge relay system role is filled by Asp138. Asp147 provides a ligand contact to Ca(2+). The Charge relay system role is filled by His170. The Ca(2+) site is built by Leu181, Asn183, Ile185, Val187, Ala275, Tyr277, Thr280, and Asp303. Ser327 acts as the Charge relay system in catalysis.

It belongs to the peptidase S8 family. It depends on Ca(2+) as a cofactor.

Its subcellular location is the secreted. It catalyses the reaction Hydrolysis of proteins with broad specificity for peptide bonds, and a preference for a large uncharged residue in P1. Hydrolyzes peptide amides.. With respect to regulation, inhibited by PMSF (phenylmethylsulphonyl fluoride) and 3,4-dichloroisocoumarin but not by EDTA (shown for strain RT-5). Its function is as follows. An extracellular alkaline serine protease, it catalyzes the hydrolysis of proteins and peptide amides. The sequence is that of Subtilisin E from Bacillus subtilis (strain 168).